Here is a 92-residue protein sequence, read N- to C-terminus: Acylphosphatase (92 aa).

The region spanning R5–F92 is the Acylphosphatase-like domain. Catalysis depends on residues R20 and N38.

It belongs to the acylphosphatase family.

The catalysed reaction is an acyl phosphate + H2O = a carboxylate + phosphate + H(+). This Syntrophotalea carbinolica (strain DSM 2380 / NBRC 103641 / GraBd1) (Pelobacter carbinolicus) protein is Acylphosphatase (acyP).